A 165-amino-acid chain; its full sequence is Endoribonuclease YbeY (165 aa).

The Zn(2+) site is built by His130, His134, and His140.

The protein belongs to the endoribonuclease YbeY family. It depends on Zn(2+) as a cofactor.

The protein resides in the cytoplasm. In terms of biological role, single strand-specific metallo-endoribonuclease involved in late-stage 70S ribosome quality control and in maturation of the 3' terminus of the 16S rRNA. The protein is Endoribonuclease YbeY of Streptococcus pyogenes serotype M1.